A 148-amino-acid chain; its full sequence is uncharacterized protein (148 aa).

A compositionally biased stretch (basic and acidic residues) spans 97-112 (KKLDEQRMPGKPKNTE). A disordered region spans residues 97-126 (KKLDEQRMPGKPKNTEGSKSTIRKKANVGN).

This is an uncharacterized protein from Caenorhabditis elegans.